A 419-amino-acid chain; its full sequence is Adenylosuccinate synthetase (419 aa).

GTP-binding positions include 12-18 and 40-42; these read GDEGKGK and GHT. D13 serves as the catalytic Proton acceptor. Residues D13 and G40 each contribute to the Mg(2+) site. IMP contacts are provided by residues 13–16, 38–41, T128, R142, Q220, T235, and R299; these read DEGK and NAGH. H41 acts as the Proton donor in catalysis. 295-301 contributes to the substrate binding site; sequence SITKRPR. GTP is bound by residues R301, 327-329, and 407-409; these read KSD and SLG.

This sequence belongs to the adenylosuccinate synthetase family. In terms of assembly, homodimer. Requires Mg(2+) as cofactor.

It localises to the cytoplasm. It carries out the reaction IMP + L-aspartate + GTP = N(6)-(1,2-dicarboxyethyl)-AMP + GDP + phosphate + 2 H(+). It participates in purine metabolism; AMP biosynthesis via de novo pathway; AMP from IMP: step 1/2. Plays an important role in the de novo pathway of purine nucleotide biosynthesis. Catalyzes the first committed step in the biosynthesis of AMP from IMP. The polypeptide is Adenylosuccinate synthetase (Azobacteroides pseudotrichonymphae genomovar. CFP2).